The primary structure comprises 354 residues: Rhodopsin (354 aa).

At 1–36 the chain is on the extracellular side; the sequence is MNGTEGPMFYVPMSNATGVVKSPYDYPQYYLVAPWA. Residues N2 and N15 are each glycosylated (N-linked (GlcNAc...) asparagine). Residues 37-61 traverse the membrane as a helical segment; it reads YGCLAAYMFFLIITGFPINFLTLYV. The Cytoplasmic segment spans residues 62-73; it reads TIEHKKLRTPLN. The helical transmembrane segment at 74–96 threads the bilayer; sequence YILLNLAISDLFMVFGGFTTTMY. Over 97–110 the chain is Extracellular; sequence TSLHGYFVFGRIGC. Residues C110 and C187 are joined by a disulfide bond. A helical transmembrane segment spans residues 111–133; sequence NLEGFFATLGGEMGLWSLVVLAF. The 'Ionic lock' involved in activated form stabilization signature appears at 134–136; the sequence is ERW. The Cytoplasmic segment spans residues 134–152; that stretch reads ERWMVVCKPVSNFRFGENH. Residues 153–173 traverse the membrane as a helical segment; sequence AIMGVVFTWFMACTCAVPPLV. Residues 174-202 lie on the Extracellular side of the membrane; the sequence is GWSRYIPEGMQCSCGVDYYTRAPGYNNES. Residues 203 to 224 form a helical membrane-spanning segment; sequence FVIYMFLVHFIIPLIVIFFCYG. The Cytoplasmic portion of the chain corresponds to 225-252; it reads RLVCTVKDAAAQQQESETTQRAEREVTR. Residues 253-274 traverse the membrane as a helical segment; that stretch reads MVVIMVIGFLICWIPYASVAWY. Residues 275–286 are Extracellular-facing; that stretch reads IFTHQGSEFGPV. A helical membrane pass occupies residues 287–308; sequence FMTVPAFFAKSAAVYNPCIYIC. Position 296 is an N6-(retinylidene)lysine (K296). Topologically, residues 309–354 are cytoplasmic; the sequence is MNKQFRHCMITTLCCGKNPFEEEEGASTTASKTEASSVSSSSVSPA. 2 S-palmitoyl cysteine lipidation sites follow: C322 and C323. The tract at residues 333–354 is disordered; the sequence is GASTTASKTEASSVSSSSVSPA. The segment covering 334 to 354 has biased composition (low complexity); the sequence is ASTTASKTEASSVSSSSVSPA.

The protein belongs to the G-protein coupled receptor 1 family. Opsin subfamily. In terms of processing, phosphorylated on some or all of the serine and threonine residues present in the C-terminal region. Contains one covalently linked retinal chromophore.

It is found in the membrane. The protein localises to the cell projection. The protein resides in the cilium. It localises to the photoreceptor outer segment. In terms of biological role, photoreceptor required for image-forming vision at low light intensity. While most salt water fish species use retinal as chromophore, most freshwater fish use 3-dehydroretinal, or a mixture of retinal and 3-dehydroretinal. Light-induced isomerization of 11-cis to all-trans retinal triggers a conformational change that activates signaling via G-proteins. Subsequent receptor phosphorylation mediates displacement of the bound G-protein alpha subunit by arrestin and terminates signaling. The sequence is that of Rhodopsin (rho) from Cyprinus carpio (Common carp).